A 207-amino-acid chain; its full sequence is Protein FMP32, mitochondrial (207 aa).

Residues 100–136 (ADRSEFHNIQNEYESVKNDLEKLRNKLREEITKTNAG) are a coiled coil. The helical transmembrane segment at 184-206 (VMQWLIGVCTGTFALVLAYMRLL) threads the bilayer.

It belongs to the CCDC90 family.

Its subcellular location is the mitochondrion. The protein resides in the membrane. This Saccharomyces cerevisiae (strain ATCC 204508 / S288c) (Baker's yeast) protein is Protein FMP32, mitochondrial (FMP32).